A 126-amino-acid polypeptide reads, in one-letter code: Large ribosomal subunit protein bL19 (126 aa).

It belongs to the bacterial ribosomal protein bL19 family.

In terms of biological role, this protein is located at the 30S-50S ribosomal subunit interface and may play a role in the structure and function of the aminoacyl-tRNA binding site. The chain is Large ribosomal subunit protein bL19 from Paracoccus denitrificans (strain Pd 1222).